Reading from the N-terminus, the 328-residue chain is Tetraacyldisaccharide 4'-kinase (328 aa).

Position 55–62 (threonine 55–threonine 62) interacts with ATP.

This sequence belongs to the LpxK family.

It catalyses the reaction a lipid A disaccharide + ATP = a lipid IVA + ADP + H(+). It participates in glycolipid biosynthesis; lipid IV(A) biosynthesis; lipid IV(A) from (3R)-3-hydroxytetradecanoyl-[acyl-carrier-protein] and UDP-N-acetyl-alpha-D-glucosamine: step 6/6. Functionally, transfers the gamma-phosphate of ATP to the 4'-position of a tetraacyldisaccharide 1-phosphate intermediate (termed DS-1-P) to form tetraacyldisaccharide 1,4'-bis-phosphate (lipid IVA). In Escherichia coli (strain SMS-3-5 / SECEC), this protein is Tetraacyldisaccharide 4'-kinase.